The following is a 478-amino-acid chain: ATP-dependent RNA helicase DDX19A (478 aa).

N-acetylalanine is present on A2. The tract at residues 2–299 (ATDSWALAVD…DPNVIKLKRE (298 aa)) is N-terminal lobe. A Glycyl lysine isopeptide (Lys-Gly) (interchain with G-Cter in SUMO1); alternate cross-link involves residue K26. K26 participates in a covalent cross-link: Glycyl lysine isopeptide (Lys-Gly) (interchain with G-Cter in SUMO2); alternate. Position 42 is a phosphothreonine (T42). An N-terminal helix region spans residues 54-67 (DRAAQSLLNKLIRS). Residues 91-119 (KSFEELRLKPQLLQGVYAMGFNRPSKIQE) carry the Q motif motif. ATP is bound by residues Q118 and 137–144 (SQSGTGKT). One can recognise a Helicase ATP-binding domain in the interval 124–294 (MMLAEPPQNL…QKVVPDPNVI (171 aa)). The DEAD box signature appears at 241 to 244 (DEAD). Residues 300-478 (EETLDTIKQY…DLDEIEKIAN (179 aa)) are C-terminal lobe. Residues 305–473 (TIKQYYVLCS…RLDTDDLDEI (169 aa)) enclose the Helicase C-terminal domain. Residues R428 and R431 each coordinate ATP.

This sequence belongs to the DEAD box helicase family. DDX19/DBP5 subfamily.

It localises to the cytoplasm. It is found in the nucleus. Its subcellular location is the nucleoplasm. It carries out the reaction ATP + H2O = ADP + phosphate + H(+). Functionally, ATP-dependent RNA helicase involved in mRNA export from the nucleus. Rather than unwinding RNA duplexes, DDX19 functions as a remodeler of ribonucleoprotein particles, whereby proteins bound to nuclear mRNA are dissociated and replaced by cytoplasmic mRNA binding proteins. The sequence is that of ATP-dependent RNA helicase DDX19A (DDX19A) from Homo sapiens (Human).